A 520-amino-acid chain; its full sequence is Ribonuclease Y (520 aa).

Residues 1 to 21 traverse the membrane as a helical segment; the sequence is MDIITIIIAVIAGIGGGFGIS. Positions 210 to 276 constitute a KH domain; it reads CVSVFNIESD…RLALHKLVTD (67 aa). The 94-residue stretch at 336 to 429 folds into the HD domain; sequence LLQHSREVSK…VQVCDAISGA (94 aa).

It belongs to the RNase Y family.

The protein localises to the cell membrane. Its function is as follows. Endoribonuclease that initiates mRNA decay. This chain is Ribonuclease Y, found in Flavobacterium psychrophilum (strain ATCC 49511 / DSM 21280 / CIP 103535 / JIP02/86).